Reading from the N-terminus, the 515-residue chain is E3 ubiquitin-protein ligase RNF38 (515 aa).

The Bipartite nuclear localization signal 1 motif lies at 57 to 71 (DSPSPKRQRLSHSVF). Residues 73-141 (YTSASPAPSP…LSRHNSISQD (69 aa)) form a disordered region. A compositionally biased stretch (polar residues) spans 89–104 (MTSNRQPPSVRPSQHH). The Bipartite nuclear localization signal 2 motif lies at 115–131 (RNRRSPPVRRQRGRRDR). Basic residues predominate over residues 115 to 134 (RNRRSPPVRRQRGRRDRLSR). The segment at 463 to 504 (CVVCMCDFESRQLLRVLPCNHEFHAKCVDKWLKANRTCPICR) adopts an RING-type zinc-finger fold.

Widely expressed with highest levels in testis.

Its subcellular location is the nucleus. The enzyme catalyses S-ubiquitinyl-[E2 ubiquitin-conjugating enzyme]-L-cysteine + [acceptor protein]-L-lysine = [E2 ubiquitin-conjugating enzyme]-L-cysteine + N(6)-ubiquitinyl-[acceptor protein]-L-lysine.. It participates in protein modification; protein ubiquitination. Acts as an E3 ubiquitin-protein ligase able to ubiquitinate p53/TP53 which promotes its relocalization to discrete foci associated with PML nuclear bodies. Exhibits preference for UBE2D2 as a E2 enzyme. The sequence is that of E3 ubiquitin-protein ligase RNF38 from Homo sapiens (Human).